The following is a 398-amino-acid chain: uncharacterized protein (398 aa).

The 67-residue stretch at 240 to 306 (SLNKNIDQLI…SITVTTNDGS (67 aa)) folds into the BIG2 domain.

This is an uncharacterized protein from Clostridium acetobutylicum (strain ATCC 824 / DSM 792 / JCM 1419 / IAM 19013 / LMG 5710 / NBRC 13948 / NRRL B-527 / VKM B-1787 / 2291 / W).